Consider the following 125-residue polypeptide: Fluoride-specific ion channel FluC (125 aa).

A run of 4 helical transmembrane segments spans residues 4 to 24, 32 to 52, 67 to 87, and 100 to 120; these read LMLVCLGGAIGAGMRHLTVTA, AFPWGTLAVNVAGSFAMGLLV, LLLAPGMLGGFTTFSAFSLDV, and LAYVLASVAGSILALFVGLWL. Residues G75 and T78 each coordinate Na(+).

The protein belongs to the fluoride channel Fluc/FEX (TC 1.A.43) family.

The protein localises to the cell inner membrane. The catalysed reaction is fluoride(in) = fluoride(out). Na(+) is not transported, but it plays an essential structural role and its presence is essential for fluoride channel function. Functionally, fluoride-specific ion channel. Important for reducing fluoride concentration in the cell, thus reducing its toxicity. The chain is Fluoride-specific ion channel FluC from Chelativorans sp. (strain BNC1).